Consider the following 833-residue polypeptide: Homeobox-leucine zipper protein ATHB-8 (833 aa).

The homeobox DNA-binding region spans 12–75 (DNGKYVRYTP…NRRCREKQRK (64 aa)). A coiled-coil region spans residues 70-108 (REKQRKEASRLQAVNRKLTAMNKLLMEENDRLQKQVSHL). The 229-residue stretch at 150-378 (RDASPAGLLS…ISQEISQPNV (229 aa)) folds into the START domain.

The protein belongs to the HD-ZIP homeobox family. Class III subfamily. As to quaternary structure, interacts with ESR1 and ESR2. Interacts with ZPR3.

It localises to the nucleus. Probable transcription factor involved in the regulation of vascular development. May promote differentiation of precambial and cambial cells. This chain is Homeobox-leucine zipper protein ATHB-8 (ATHB-8), found in Arabidopsis thaliana (Mouse-ear cress).